Reading from the N-terminus, the 159-residue chain is Disulfide bond formation protein B (159 aa).

At 1 to 8 (MQANSRAF) the chain is on the cytoplasmic side. A helical membrane pass occupies residues 9–25 (FLLIAVIAFGLVGYALY). At 26–43 (LQHVEGLQPCPLCVLQRF) the chain is on the periplasmic side. A disulfide bond links cysteine 35 and cysteine 38. The chain crosses the membrane as a helical span at residues 44 to 57 (AFVGIGVFSLLAAL). Residues 58–63 (SSATRL) lie on the Cytoplasmic side of the membrane. A helical membrane pass occupies residues 64–81 (LWHGLGMLSGLGGIFVAG). Over 82–136 (YHVSLLLNPKASCGIDPIENWVNALPTAKWLPQVFESDGLCTAPLPPVLGVSIPL) the chain is Periplasmic. Cysteines 94 and 122 form a disulfide. Residues 137 to 155 (WSLIWMVILALTLVVAMIR) form a helical membrane-spanning segment. The Cytoplasmic segment spans residues 156–159 (RERR).

This sequence belongs to the DsbB family.

The protein localises to the cell inner membrane. Its function is as follows. Required for disulfide bond formation in some periplasmic proteins. Acts by oxidizing the DsbA protein. The polypeptide is Disulfide bond formation protein B (Ralstonia nicotianae (strain ATCC BAA-1114 / GMI1000) (Ralstonia solanacearum)).